A 179-amino-acid chain; its full sequence is ATP synthase subunit delta (179 aa).

Belongs to the ATPase delta chain family. In terms of assembly, F-type ATPases have 2 components, F(1) - the catalytic core - and F(0) - the membrane proton channel. F(1) has five subunits: alpha(3), beta(3), gamma(1), delta(1), epsilon(1). F(0) has three main subunits: a(1), b(2) and c(10-14). The alpha and beta chains form an alternating ring which encloses part of the gamma chain. F(1) is attached to F(0) by a central stalk formed by the gamma and epsilon chains, while a peripheral stalk is formed by the delta and b chains.

Its subcellular location is the cell inner membrane. Functionally, f(1)F(0) ATP synthase produces ATP from ADP in the presence of a proton or sodium gradient. F-type ATPases consist of two structural domains, F(1) containing the extramembraneous catalytic core and F(0) containing the membrane proton channel, linked together by a central stalk and a peripheral stalk. During catalysis, ATP synthesis in the catalytic domain of F(1) is coupled via a rotary mechanism of the central stalk subunits to proton translocation. In terms of biological role, this protein is part of the stalk that links CF(0) to CF(1). It either transmits conformational changes from CF(0) to CF(1) or is implicated in proton conduction. The chain is ATP synthase subunit delta from Bordetella avium (strain 197N).